A 70-amino-acid chain; its full sequence is Large ribosomal subunit protein bL31 (70 aa).

Cysteine 16, cysteine 18, cysteine 37, and cysteine 40 together coordinate Zn(2+).

Belongs to the bacterial ribosomal protein bL31 family. Type A subfamily. As to quaternary structure, part of the 50S ribosomal subunit. Zn(2+) is required as a cofactor.

Binds the 23S rRNA. This is Large ribosomal subunit protein bL31 from Shewanella oneidensis (strain ATCC 700550 / JCM 31522 / CIP 106686 / LMG 19005 / NCIMB 14063 / MR-1).